Here is an 895-residue protein sequence, read N- to C-terminus: Cellulose 1,4-beta-cellobiosidase (895 aa).

Positions 1–27 (MNFRRMLCAAIVLTIVLSIMLPSTVFA) are cleaved as a signal peptide. The 160-residue stretch at 40–199 (NDLLYERTFD…YLDDVSLYDP (160 aa)) folds into the CBM-cenC domain. Positions 199–240 (PRFVKPVEYVLPQPDVRVNQVGYLPFAKKYATVVSSSTSPLK) are linker. The interval 241–815 (WQLLNSANQV…WVTAYLDEID (575 aa)) is catalytic. The Nucleophile role is filled by Asp-386. Residues His-737, Asp-786, and Glu-795 contribute to the active site. The region spanning 828–894 (PEVIYGDCNG…ILKEIDVLPH (67 aa)) is the Dockerin domain.

It belongs to the glycosyl hydrolase 9 (cellulase E) family.

It localises to the secreted. The enzyme catalyses Hydrolysis of (1-&gt;4)-beta-D-glucosidic linkages in cellulose and cellotetraose, releasing cellobiose from the non-reducing ends of the chains.. Its activity is regulated as follows. Inhibited by cellobiose. The sequence is that of Cellulose 1,4-beta-cellobiosidase (celK) from Acetivibrio thermocellus (Hungateiclostridium thermocellum).